A 395-amino-acid polypeptide reads, in one-letter code: Phosphoglycerate kinase (395 aa).

Substrate-binding positions include 20–22 (DFN), Arg36, 59–62 (HLGR), Arg120, and Arg157. Residues Lys208, Gly296, Glu327, and 353-356 (GGDT) each bind ATP.

This sequence belongs to the phosphoglycerate kinase family. As to quaternary structure, monomer.

The protein localises to the cytoplasm. The enzyme catalyses (2R)-3-phosphoglycerate + ATP = (2R)-3-phospho-glyceroyl phosphate + ADP. It participates in carbohydrate degradation; glycolysis; pyruvate from D-glyceraldehyde 3-phosphate: step 2/5. The chain is Phosphoglycerate kinase from Tropheryma whipplei (strain TW08/27) (Whipple's bacillus).